The following is a 200-amino-acid chain: Mediator of RNA polymerase II transcription subunit 8 (200 aa).

Belongs to the Mediator complex subunit 8 family. Component of the Mediator complex.

It is found in the nucleus. Functionally, component of the Mediator complex, a coactivator involved in the regulated transcription of nearly all RNA polymerase II-dependent genes. Mediator functions as a bridge to convey information from gene-specific regulatory proteins to the basal RNA polymerase II transcription machinery. Mediator is recruited to promoters by direct interactions with regulatory proteins and serves as a scaffold for the assembly of a functional preinitiation complex with RNA polymerase II and the general transcription factors. The sequence is that of Mediator of RNA polymerase II transcription subunit 8 (med8) from Schizosaccharomyces pombe (strain 972 / ATCC 24843) (Fission yeast).